The following is a 327-amino-acid chain: Methionyl-tRNA formyltransferase (327 aa).

(6S)-5,6,7,8-tetrahydrofolate is bound at residue 121-124 (SLLP).

The protein belongs to the Fmt family.

It carries out the reaction L-methionyl-tRNA(fMet) + (6R)-10-formyltetrahydrofolate = N-formyl-L-methionyl-tRNA(fMet) + (6S)-5,6,7,8-tetrahydrofolate + H(+). Attaches a formyl group to the free amino group of methionyl-tRNA(fMet). The formyl group appears to play a dual role in the initiator identity of N-formylmethionyl-tRNA by promoting its recognition by IF2 and preventing the misappropriation of this tRNA by the elongation apparatus. In Burkholderia pseudomallei (strain K96243), this protein is Methionyl-tRNA formyltransferase.